Reading from the N-terminus, the 199-residue chain is Outer dense fiber protein 4 (199 aa).

A compositionally biased stretch (basic and acidic residues) spans 1–14; it reads MNIRSLERAGRAGK. The disordered stretch occupies residues 1–25; that stretch reads MNIRSLERAGRAGKQDGVAVSPGQE. A Phosphoserine modification is found at Ser-53. 3 helical membrane-spanning segments follow: residues 68-88, 109-128, and 159-179; these read IAQV…VVMV, VTTK…LHIY, and LALG…IPGL.

It is found in the membrane. In terms of biological role, component of the outer dense fibers (ODF) of spermatozoa which could be involved in sperm tail structure, sperm movement and general organization of cellular cytoskeleton. This Bos taurus (Bovine) protein is Outer dense fiber protein 4 (ODF4).